The following is a 362-amino-acid chain: Phosphoserine aminotransferase (362 aa).

An L-glutamate-binding site is contributed by Arg-42. Pyridoxal 5'-phosphate is bound by residues 76-77, Trp-102, Thr-152, Asp-173, and Gln-196; that span reads AS. Lys-197 carries the post-translational modification N6-(pyridoxal phosphate)lysine. Position 238 to 239 (238 to 239) interacts with pyridoxal 5'-phosphate; it reads NT.

Belongs to the class-V pyridoxal-phosphate-dependent aminotransferase family. SerC subfamily. As to quaternary structure, homodimer. Pyridoxal 5'-phosphate serves as cofactor.

It is found in the cytoplasm. It catalyses the reaction O-phospho-L-serine + 2-oxoglutarate = 3-phosphooxypyruvate + L-glutamate. The catalysed reaction is 4-(phosphooxy)-L-threonine + 2-oxoglutarate = (R)-3-hydroxy-2-oxo-4-phosphooxybutanoate + L-glutamate. It functions in the pathway amino-acid biosynthesis; L-serine biosynthesis; L-serine from 3-phospho-D-glycerate: step 2/3. Its pathway is cofactor biosynthesis; pyridoxine 5'-phosphate biosynthesis; pyridoxine 5'-phosphate from D-erythrose 4-phosphate: step 3/5. Its function is as follows. Catalyzes the reversible conversion of 3-phosphohydroxypyruvate to phosphoserine and of 3-hydroxy-2-oxo-4-phosphonooxybutanoate to phosphohydroxythreonine. This Chromobacterium violaceum (strain ATCC 12472 / DSM 30191 / JCM 1249 / CCUG 213 / NBRC 12614 / NCIMB 9131 / NCTC 9757 / MK) protein is Phosphoserine aminotransferase.